The chain runs to 206 residues: Uridine kinase (206 aa).

9–16 (GGSGSGKT) contacts ATP.

The protein belongs to the uridine kinase family. In terms of assembly, monomer.

The protein localises to the cytoplasm. It catalyses the reaction uridine + ATP = UMP + ADP + H(+). It carries out the reaction cytidine + ATP = CMP + ADP + H(+). It functions in the pathway pyrimidine metabolism; CTP biosynthesis via salvage pathway; CTP from cytidine: step 1/3. Its pathway is pyrimidine metabolism; UMP biosynthesis via salvage pathway; UMP from uridine: step 1/1. The chain is Uridine kinase (udk) from Borreliella burgdorferi (strain ATCC 35210 / DSM 4680 / CIP 102532 / B31) (Borrelia burgdorferi).